The following is a 424-amino-acid chain: Splicing factor 3B subunit 4 (424 aa).

N-acetylalanine is present on A2. 2 consecutive RRM domains span residues 13–91 (ATVY…KASA) and 100–179 (ANIF…YAFK). Residue Y56 is modified to Phosphotyrosine. A disordered region spans residues 207-424 (PHQLFADAPP…RGPLRGPLPQ (218 aa)). A compositionally biased stretch (low complexity) spans 222 to 231 (NPVVSSLGSG). Residues 232-268 (LPPPGMPPPGSFPPPVPPPGALPPGIPPAMPPPPMPP) show a composition bias toward pro residues. Composition is skewed to low complexity over residues 269 to 280 (GAAGHGPPSAGT) and 303 to 323 (HPGM…GHPH). Pro residues-rich tracts occupy residues 332-381 (QPPP…PLMP) and 388-424 (PPRP…PLPQ).

This sequence belongs to the SF3B4 family. As to quaternary structure, component of the 17S U2 SnRNP complex, a ribonucleoprotein complex that contains small nuclear RNA (snRNA) U2 and a number of specific proteins. Part of the SF3B subcomplex of the 17S U2 SnRNP complex. SF3B associates with the splicing subcomplex SF3A and a 12S RNA unit to form the U2 small nuclear ribonucleoproteins complex (U2 snRNP). SF3B4 has been found in complex spliceosome 'B' and 'C' as well. Component of the minor (U12-type spliceosome) spliceosome. Found in a complex with PRMT9, SF3B2 and SF3B4.

It localises to the nucleus. Component of the 17S U2 SnRNP complex of the spliceosome, a large ribonucleoprotein complex that removes introns from transcribed pre-mRNAs. The 17S U2 SnRNP complex (1) directly participates in early spliceosome assembly and (2) mediates recognition of the intron branch site during pre-mRNA splicing by promoting the selection of the pre-mRNA branch-site adenosine, the nucleophile for the first step of splicing. Within the 17S U2 SnRNP complex, SF3B4 is part of the SF3B subcomplex, which is required for 'A' complex assembly formed by the stable binding of U2 snRNP to the branchpoint sequence in pre-mRNA. Sequence independent binding of SF3A and SF3B subcomplexes upstream of the branch site is essential, it may anchor U2 snRNP to the pre-mRNA. May also be involved in the assembly of the 'E' complex. Also acts as a component of the minor spliceosome, which is involved in the splicing of U12-type introns in pre-mRNAs. This chain is Splicing factor 3B subunit 4 (SF3B4), found in Homo sapiens (Human).